The following is a 402-amino-acid chain: Argininosuccinate synthase (402 aa).

9–17 (AYSGGLDTS) serves as a coordination point for ATP. Y86 contacts L-citrulline. G116 contacts ATP. 3 residues coordinate L-aspartate: T118, N122, and D123. N122 lines the L-citrulline pocket. L-citrulline contacts are provided by R126, S174, S183, E259, and Y271.

The protein belongs to the argininosuccinate synthase family. Type 1 subfamily. Homotetramer.

It is found in the cytoplasm. It catalyses the reaction L-citrulline + L-aspartate + ATP = 2-(N(omega)-L-arginino)succinate + AMP + diphosphate + H(+). It functions in the pathway amino-acid biosynthesis; L-arginine biosynthesis; L-arginine from L-ornithine and carbamoyl phosphate: step 2/3. This is Argininosuccinate synthase from Anoxybacillus flavithermus (strain DSM 21510 / WK1).